Here is a 590-residue protein sequence, read N- to C-terminus: Aspartate--tRNA(Asp/Asn) ligase (590 aa).

Glu-176 serves as a coordination point for L-aspartate. The tract at residues 200–203 is aspartate; sequence QLFK. L-aspartate-binding residues include Arg-222 and His-451. ATP is bound at residue 222-224; it reads RDE. ATP is bound at residue Glu-485. Position 492 (Arg-492) interacts with L-aspartate. 537 to 540 serves as a coordination point for ATP; the sequence is GIDR.

It belongs to the class-II aminoacyl-tRNA synthetase family. Type 1 subfamily. In terms of assembly, homodimer.

The protein localises to the cytoplasm. The enzyme catalyses tRNA(Asx) + L-aspartate + ATP = L-aspartyl-tRNA(Asx) + AMP + diphosphate. Its function is as follows. Aspartyl-tRNA synthetase with relaxed tRNA specificity since it is able to aspartylate not only its cognate tRNA(Asp) but also tRNA(Asn). Reaction proceeds in two steps: L-aspartate is first activated by ATP to form Asp-AMP and then transferred to the acceptor end of tRNA(Asp/Asn). This chain is Aspartate--tRNA(Asp/Asn) ligase, found in Ehrlichia ruminantium (strain Welgevonden).